We begin with the raw amino-acid sequence, 190 residues long: Crossover junction endodeoxyribonuclease RuvC (190 aa).

Residues D8, E67, and D139 contribute to the active site. The Mg(2+) site is built by D8, E67, and D139.

This sequence belongs to the RuvC family. As to quaternary structure, homodimer which binds Holliday junction (HJ) DNA. The HJ becomes 2-fold symmetrical on binding to RuvC with unstacked arms; it has a different conformation from HJ DNA in complex with RuvA. In the full resolvosome a probable DNA-RuvA(4)-RuvB(12)-RuvC(2) complex forms which resolves the HJ. Requires Mg(2+) as cofactor.

The protein resides in the cytoplasm. The catalysed reaction is Endonucleolytic cleavage at a junction such as a reciprocal single-stranded crossover between two homologous DNA duplexes (Holliday junction).. Its function is as follows. The RuvA-RuvB-RuvC complex processes Holliday junction (HJ) DNA during genetic recombination and DNA repair. Endonuclease that resolves HJ intermediates. Cleaves cruciform DNA by making single-stranded nicks across the HJ at symmetrical positions within the homologous arms, yielding a 5'-phosphate and a 3'-hydroxyl group; requires a central core of homology in the junction. The consensus cleavage sequence is 5'-(A/T)TT(C/G)-3'. Cleavage occurs on the 3'-side of the TT dinucleotide at the point of strand exchange. HJ branch migration catalyzed by RuvA-RuvB allows RuvC to scan DNA until it finds its consensus sequence, where it cleaves and resolves the cruciform DNA. This chain is Crossover junction endodeoxyribonuclease RuvC, found in Haemophilus influenzae (strain PittEE).